A 627-amino-acid polypeptide reads, in one-letter code: Ras and EF-hand domain-containing protein homolog (627 aa).

The stretch at 55–245 (YERVIRNFLR…RKLHDSNDGL (191 aa)) forms a coiled coil. Phosphoserine occurs at positions 266 and 272. GTP-binding positions include 438–443 (AVGKSS), 541–544 (NKAD), and 578–579 (AK).

This sequence belongs to the small GTPase superfamily. Rab family. Homodimer. Interacts with the dynein-dynactin complex.

The protein resides in the cytoplasm. The protein localises to the perinuclear region. Binds predominantly GDP, and also GTP. Acts as a dynein adapter protein that activates dynein-mediated transport and dynein-dynactin motility on microtubules. In Mus musculus (Mouse), this protein is Ras and EF-hand domain-containing protein homolog (Rasef).